An 81-amino-acid polypeptide reads, in one-letter code: Cytochrome b559 subunit alpha (81 aa).

The chain crosses the membrane as a helical span at residues 21–35 (VIHSVTIPSLFVGGW). His23 serves as a coordination point for heme.

This sequence belongs to the PsbE/PsbF family. Heterodimer of an alpha subunit and a beta subunit. PSII is composed of 1 copy each of membrane proteins PsbA, PsbB, PsbC, PsbD, PsbE, PsbF, PsbH, PsbI, PsbJ, PsbK, PsbL, PsbM, PsbT, PsbY, PsbZ, Psb30/Ycf12, at least 3 peripheral proteins of the oxygen-evolving complex and a large number of cofactors. It forms dimeric complexes. Heme b serves as cofactor.

The protein localises to the plastid. It localises to the chloroplast thylakoid membrane. Functionally, this b-type cytochrome is tightly associated with the reaction center of photosystem II (PSII). PSII is a light-driven water:plastoquinone oxidoreductase that uses light energy to abstract electrons from H(2)O, generating O(2) and a proton gradient subsequently used for ATP formation. It consists of a core antenna complex that captures photons, and an electron transfer chain that converts photonic excitation into a charge separation. This Euglena gracilis protein is Cytochrome b559 subunit alpha.